We begin with the raw amino-acid sequence, 288 residues long: Bifunctional protein FolD (288 aa).

NADP(+)-binding positions include 166 to 168 and isoleucine 232; that span reads GAS.

Belongs to the tetrahydrofolate dehydrogenase/cyclohydrolase family. Homodimer.

The enzyme catalyses (6R)-5,10-methylene-5,6,7,8-tetrahydrofolate + NADP(+) = (6R)-5,10-methenyltetrahydrofolate + NADPH. It catalyses the reaction (6R)-5,10-methenyltetrahydrofolate + H2O = (6R)-10-formyltetrahydrofolate + H(+). It participates in one-carbon metabolism; tetrahydrofolate interconversion. In terms of biological role, catalyzes the oxidation of 5,10-methylenetetrahydrofolate to 5,10-methenyltetrahydrofolate and then the hydrolysis of 5,10-methenyltetrahydrofolate to 10-formyltetrahydrofolate. The sequence is that of Bifunctional protein FolD from Salmonella arizonae (strain ATCC BAA-731 / CDC346-86 / RSK2980).